Reading from the N-terminus, the 1086-residue chain is NAD(P) transhydrogenase, mitochondrial (1086 aa).

The transit peptide at 1–43 (MANLLKTVVTGCSCPLLSNLGSCKGLRVKKDFLRTFYTHQELW) directs the protein to the mitochondrion. Topologically, residues 44–474 (CKAPVKPGIP…TITPFRKTMS (431 aa)) are mitochondrial matrix. Position 70 is an N6-acetyllysine (Lys70). Position 117 is an N6-succinyllysine (Lys117). Residue 182–184 (RVT) participates in NAD(+) binding. The residue at position 224 (Lys224) is an N6-succinyllysine. Residues Val237, 257 to 259 (DTR), and Gly287 contribute to the NAD(+) site. Lys294 is subject to N6-succinyllysine. NAD(+) is bound by residues Glu300 and Leu319. Lys331 is modified (N6-succinyllysine). Position 397 is an N6-acetyllysine (Lys397). Helical transmembrane passes span 475–493 (TASA…GIAA), 501–521 (MVTT…GVTP), 527–546 (LMSV…LALM), and 558–578 (GLAA…FLVT). Residues 579–595 (QRMLDMFKRPTDPPEYN) lie on the Mitochondrial matrix side of the membrane. Helical transmembrane passes span 596–616 (YLYL…LYSG), 622–642 (IMYL…STQG), 646–666 (LGNA…LGVL), 672–691 (LLAQ…LTIA), and 702–722 (LVAA…IAEY). The Cytoplasmic segment spans residues 723-739 (IIEYPHFATDAAANLTK). The next 5 membrane-spanning stretches (helical) occupy residues 740–760 (IVAY…LIAY), 778–797 (HLLN…PFMV), 801–819 (FTTG…AVMG), 833–853 (VVIT…GFLL), and 857–879 (LLTI…MCVA). At 880–1086 (MNRSLANVIL…QAKVRESYQK (207 aa)) the chain is on the mitochondrial matrix side. NADP(+)-binding positions include Tyr933, 965 to 970 (VAGRMP), 1007 to 1011 (GANDT), 1026 to 1027 (GM), 1042 to 1049 (KRSLGVGY), and 1068 to 1069 (DA). Lys1079 bears the N6-succinyllysine mark.

The protein in the N-terminal section; belongs to the AlaDH/PNT family. It in the C-terminal section; belongs to the PNT beta subunit family. As to quaternary structure, homodimer. As to expression, widely expressed with expression most readily detectable in adrenal, heart, kidney, thyroid and adipose tissues.

The protein localises to the mitochondrion inner membrane. The catalysed reaction is NAD(+) + NADPH + H(+)(in) = NADH + NADP(+) + H(+)(out). Functionally, the transhydrogenation between NADH and NADP is coupled to respiration and ATP hydrolysis and functions as a proton pump across the membrane. May play a role in reactive oxygen species (ROS) detoxification in the adrenal gland. The chain is NAD(P) transhydrogenase, mitochondrial (NNT) from Homo sapiens (Human).